We begin with the raw amino-acid sequence, 55 residues long: uncharacterized protein (55 aa).

The segment at 1-22 is disordered; it reads MPALKSHVRPNSAAPARRQPWP.

This is an uncharacterized protein from Rhodobacter capsulatus (Rhodopseudomonas capsulata).